The sequence spans 451 residues: Phosphoglucosamine mutase (451 aa).

The Phosphoserine intermediate role is filled by serine 103. Residues serine 103, aspartate 243, aspartate 245, and aspartate 247 each coordinate Mg(2+). Position 103 is a phosphoserine (serine 103).

This sequence belongs to the phosphohexose mutase family. The cofactor is Mg(2+). Post-translationally, activated by phosphorylation.

It catalyses the reaction alpha-D-glucosamine 1-phosphate = D-glucosamine 6-phosphate. Its function is as follows. Catalyzes the conversion of glucosamine-6-phosphate to glucosamine-1-phosphate. The polypeptide is Phosphoglucosamine mutase (Lactiplantibacillus plantarum (strain ATCC BAA-793 / NCIMB 8826 / WCFS1) (Lactobacillus plantarum)).